The following is a 585-amino-acid chain: MENSRIPGEHFFTTSDNTALFYRHWPALQPGAKKVIVLFHRGHEHSGRLQHLVDELAMPDTAFYAWDARGHGKSSGPRGYSPSLARSVRDVDEFVRFAASDSQVGLEEVVVIAQSVGAVLVATWIHDYAPAIRGLVLASPAFKVKLYVPLARPALALWHRLRGLFFINSYVKGRYLTHDRQRGASFNNDPLITRAIAVNILLDLYKTSERIIRDAAAITLPTQLLISGDDYVVHRQPQIDFYQRLRSPLKELHLLPGFYHDTLGEENRALAFEKMQSFISRLYANKSQKFDYQHEDCTGPSADRWRLLSGGPVPLSPVDLAYRFMRKAMKLFGTHSSGLHLGMSTGFDSGSSLDYVYQNQPQGSNAFGRLVDKIYLNSVGWRGIRQRKTHLQILIKQAVADLHAKGLAVRVVDIAAGHGRYVLDALANEPAVSDILLRDYSELNVAQGQEMIAQRGMSGRVRFEQGDAFNPEELSALTPRPTLAIVSGLYELFPENEQVKNSLAGLANAIEPGGILIYTGQPWHPQLEMIAGVLTSHKDGKPWVMRVRSQGEMDSLVRDAGFDKCTQRIDEWGIFTVSMAVRRDN.

This is an uncharacterized protein from Escherichia coli (strain K12).